A 576-amino-acid chain; its full sequence is Arginine--tRNA ligase (576 aa).

Positions 122 to 132 (PNVAKQMHVGH) match the 'HIGH' region motif.

Belongs to the class-I aminoacyl-tRNA synthetase family. Monomer.

Its subcellular location is the cytoplasm. It catalyses the reaction tRNA(Arg) + L-arginine + ATP = L-arginyl-tRNA(Arg) + AMP + diphosphate. This is Arginine--tRNA ligase from Yersinia pseudotuberculosis serotype I (strain IP32953).